The chain runs to 184 residues: Large ribosomal subunit protein uL22 (184 aa).

This sequence belongs to the universal ribosomal protein uL22 family.

The sequence is that of Large ribosomal subunit protein uL22 (RPL17) from Yarrowia lipolytica (strain CLIB 122 / E 150) (Yeast).